We begin with the raw amino-acid sequence, 623 residues long: Membrane protein insertase YidC (623 aa).

5 helical membrane-spanning segments follow: residues 8 to 28 (LILATGLSFLVIMVWFFLFPP), 379 to 399 (MGLAIIALTFLLKALVLPLAY), 449 to 469 (LPILIQIPIFFSLYKVIFVTI), 507 to 527 (TTMALIFIGALPILLGVSMWL), and 543 to 563 (IFAWMPWVFMFMLGHFASGLV). The span at 601–617 (KPAAQPAGKAANDGAAP) shows a compositional bias: low complexity. The interval 601–623 (KPAAQPAGKAANDGAAPAKKRKP) is disordered.

Belongs to the OXA1/ALB3/YidC family. Type 1 subfamily. In terms of assembly, interacts with the Sec translocase complex via SecD. Specifically interacts with transmembrane segments of nascent integral membrane proteins during membrane integration.

The protein localises to the cell inner membrane. In terms of biological role, required for the insertion and/or proper folding and/or complex formation of integral membrane proteins into the membrane. Involved in integration of membrane proteins that insert both dependently and independently of the Sec translocase complex, as well as at least some lipoproteins. Aids folding of multispanning membrane proteins. The sequence is that of Membrane protein insertase YidC from Cereibacter sphaeroides (strain ATCC 17029 / ATH 2.4.9) (Rhodobacter sphaeroides).